The chain runs to 296 residues: Myeloid differentiation primary response protein MyD88 (296 aa).

Positions methionine 54–isoleucine 109 constitute a Death domain. The interval glutamate 110–glycine 155 is intermediate domain. Residues glutamate 159–leucine 293 form the TIR domain. Serine 244 is modified (phosphoserine).

Homodimer. Also forms heterodimers with TIRAP. Binds to TLR2, TLR5, IRAK1, IRAK2 and IRAK4 via their respective TIR domains. Interacts with IL18R1. Interacts with BMX, IL1RL1, IKBKE and IRF7. Interacts with LRRFIP1 and LRRFIP2; this interaction positively regulates Toll-like receptor (TLR) signaling in response to agonist. Interacts with FLII. LRRFIP1 and LRRFIP2 compete with FLII for MYD88-binding. Interacts with IRF1. Upon IL1B treatment, forms a complex with PELI1, IRAK1, IRAK4 and TRAF6; this complex recruits MAP3K7/TAK1, TAB1 and TAB2 to mediate NF-kappa-B activation. Direct binding of SMAD6 to PELI1 prevents the complex formation and hence negatively regulates IL1R-TLR signaling and eventually NF-kappa-B-mediated gene expression. May interact with PIK3AP1. Interacts (via TIR domain) with DHX9 (via H2A and OB-fold regions); this interaction is direct. Interacts with OTUD4 deubiquitinase; the interaction is direct. Interacts with TLR4. As to quaternary structure, (Microbial infection) In case of infection, interacts with uropathogenic E.coli protein TcpC; suppressing Toll-like receptor (TLR)-mediated cytokine production. In terms of assembly, (Microbial infection) In case of infection, interacts with uropathogenic E.faecalis protein TcpF; suppressing Toll-like receptor (TLR)-mediated cytokine production. (Microbial infection) In case of infection, interacts with B.melitensis protein TcpB. As to quaternary structure, (Microbial infection) Interacts with human metapneumovirus protein M2-2; this interaction prevents MYD88-mediated cytokine secretion. Post-translationally, ubiquitinated; undergoes 'Lys-63'-linked polyubiquitination. OTUD4 specifically hydrolyzes 'Lys-63'-linked polyubiquitinated MYD88. Deubiquitinated by USP3 that cleaves 'Lys-63'-linked ubiquitin chains leading to inhibition of MYD88-induced NF-kappa-B signaling. (Microbial infection) Ubiquitinated by human herpesvirus 8 (KSHV) protein RTA/ORF50, leading to proteasomal degradation ans suppression of TLR4 signaling pathway. As to expression, ubiquitous.

The protein localises to the cytoplasm. Its subcellular location is the nucleus. Adapter protein involved in the Toll-like receptor and IL-1 receptor signaling pathway in the innate immune response. Acts via IRAK1, IRAK2, IRF7 and TRAF6, leading to NF-kappa-B activation, cytokine secretion and the inflammatory response. Increases IL-8 transcription. Involved in IL-18-mediated signaling pathway. Activates IRF1 resulting in its rapid migration into the nucleus to mediate an efficient induction of IFN-beta, NOS2/INOS, and IL12A genes. Upon TLR8 activation by GU-rich single-stranded RNA (GU-rich RNA) derived from viruses such as SARS-CoV-2, SARS-CoV and HIV-1, induces IL1B release through NLRP3 inflammasome activation. MyD88-mediated signaling in intestinal epithelial cells is crucial for maintenance of gut homeostasis and controls the expression of the antimicrobial lectin REG3G in the small intestine. The sequence is that of Myeloid differentiation primary response protein MyD88 from Homo sapiens (Human).